The primary structure comprises 318 residues: Melanoma-associated antigen 8 (318 aa).

The disordered stretch occupies residues 1–103; that stretch reads MLLGQKSQRY…GPSTSPDPAH (103 aa). The MAGE domain maps to 112–311; that stretch reads LDEKVAELVR…ISYPSLHEEA (200 aa).

Expressed in many tumors of several types, such as melanoma, head and neck squamous cell carcinoma, lung carcinoma and breast carcinoma, but not in normal tissues except for testis and placenta.

In terms of biological role, not known, though may play a role in embryonal development and tumor transformation or aspects of tumor progression. In Homo sapiens (Human), this protein is Melanoma-associated antigen 8 (MAGEA8).